The following is a 331-amino-acid chain: Ribosomal RNA small subunit methyltransferase H (331 aa).

S-adenosyl-L-methionine contacts are provided by residues 38 to 40 (GGY), D56, F83, D100, and Q107. Residues 308 to 331 (TDAPAGPVDPQVLGMPLIPKKGRR) form a disordered region.

This sequence belongs to the methyltransferase superfamily. RsmH family.

It localises to the cytoplasm. It carries out the reaction cytidine(1402) in 16S rRNA + S-adenosyl-L-methionine = N(4)-methylcytidine(1402) in 16S rRNA + S-adenosyl-L-homocysteine + H(+). Specifically methylates the N4 position of cytidine in position 1402 (C1402) of 16S rRNA. The sequence is that of Ribosomal RNA small subunit methyltransferase H from Cereibacter sphaeroides (strain ATCC 17025 / ATH 2.4.3) (Rhodobacter sphaeroides).